The sequence spans 140 residues: Holo-[acyl-carrier-protein] synthase (140 aa).

Mg(2+) is bound by residues D8 and E62.

The protein belongs to the P-Pant transferase superfamily. AcpS family. Requires Mg(2+) as cofactor.

It localises to the cytoplasm. It carries out the reaction apo-[ACP] + CoA = holo-[ACP] + adenosine 3',5'-bisphosphate + H(+). Its function is as follows. Transfers the 4'-phosphopantetheine moiety from coenzyme A to a Ser of acyl-carrier-protein. This Cupriavidus taiwanensis (strain DSM 17343 / BCRC 17206 / CCUG 44338 / CIP 107171 / LMG 19424 / R1) (Ralstonia taiwanensis (strain LMG 19424)) protein is Holo-[acyl-carrier-protein] synthase.